We begin with the raw amino-acid sequence, 165 residues long: Glycine cleavage system H protein, mitochondrial (165 aa).

A mitochondrion-targeting transit peptide spans 1 to 31; it reads MALRIWASSTAKALRLSSASRPHFSPLFRCF. The Lipoyl-binding domain maps to 55 to 137; sequence VATIGITDHA…YEDGWMIKVK (83 aa). Lys-96 is subject to N6-lipoyllysine.

This sequence belongs to the GcvH family. In terms of assembly, the glycine cleavage system is composed of four components that only loosely associate: the P protein (EC 1.4.4.2), the T protein (EC 2.1.2.10), the L protein (EC 1.8.1.4) and the lipoyl-bearing H protein. Requires (R)-lipoate as cofactor. In terms of tissue distribution, expressed in roots, stems and leaves.

The protein localises to the mitochondrion. Functionally, the glycine cleavage system catalyzes the degradation of glycine. The H protein shuttles the methylamine group of glycine from the P protein to the T protein. This chain is Glycine cleavage system H protein, mitochondrial (GDCSH), found in Flaveria trinervia (Clustered yellowtops).